Here is a 689-residue protein sequence, read N- to C-terminus: DNA topoisomerase 1 (689 aa).

The region spanning 3-113 (DNLVIVESPA…KENRVVFNEI (111 aa)) is the Toprim domain. Mg(2+) is bound by residues glutamate 9 and aspartate 82. The Topo IA-type catalytic domain maps to 129-557 (EMDLVDAQQA…FYNSFKQDVE (429 aa)). Positions 163-168 (SAGRVQ) are interaction with DNA. The active-site O-(5'-phospho-DNA)-tyrosine intermediate is the tyrosine 298. 3 C4-type zinc fingers span residues 577–603 (CEVC…FPDC), 617–645 (CPKC…YPEC), and 658–681 (CPKC…CSNC).

Belongs to the type IA topoisomerase family. As to quaternary structure, monomer. Requires Mg(2+) as cofactor.

It carries out the reaction ATP-independent breakage of single-stranded DNA, followed by passage and rejoining.. In terms of biological role, releases the supercoiling and torsional tension of DNA, which is introduced during the DNA replication and transcription, by transiently cleaving and rejoining one strand of the DNA duplex. Introduces a single-strand break via transesterification at a target site in duplex DNA. The scissile phosphodiester is attacked by the catalytic tyrosine of the enzyme, resulting in the formation of a DNA-(5'-phosphotyrosyl)-enzyme intermediate and the expulsion of a 3'-OH DNA strand. The free DNA strand then undergoes passage around the unbroken strand, thus removing DNA supercoils. Finally, in the religation step, the DNA 3'-OH attacks the covalent intermediate to expel the active-site tyrosine and restore the DNA phosphodiester backbone. This Staphylococcus epidermidis (strain ATCC 35984 / DSM 28319 / BCRC 17069 / CCUG 31568 / BM 3577 / RP62A) protein is DNA topoisomerase 1.